The primary structure comprises 419 residues: UDP-N-acetylglucosamine 1-carboxyvinyltransferase 2 (419 aa).

Residue 24 to 25 participates in phosphoenolpyruvate binding; that stretch reads KN. R94 lines the UDP-N-acetyl-alpha-D-glucosamine pocket. Residue C118 is the Proton donor of the active site. A 2-(S-cysteinyl)pyruvic acid O-phosphothioketal modification is found at C118. UDP-N-acetyl-alpha-D-glucosamine is bound by residues 123–127, D307, and I329; that span reads RPIDQ.

The protein belongs to the EPSP synthase family. MurA subfamily.

It is found in the cytoplasm. The enzyme catalyses phosphoenolpyruvate + UDP-N-acetyl-alpha-D-glucosamine = UDP-N-acetyl-3-O-(1-carboxyvinyl)-alpha-D-glucosamine + phosphate. It participates in cell wall biogenesis; peptidoglycan biosynthesis. Cell wall formation. Adds enolpyruvyl to UDP-N-acetylglucosamine. The polypeptide is UDP-N-acetylglucosamine 1-carboxyvinyltransferase 2 (Staphylococcus epidermidis (strain ATCC 12228 / FDA PCI 1200)).